A 411-amino-acid polypeptide reads, in one-letter code: uncharacterized protein (411 aa).

This is an uncharacterized protein from Mycoplasma genitalium (strain ATCC 33530 / DSM 19775 / NCTC 10195 / G37) (Mycoplasmoides genitalium).